The chain runs to 87 residues: U3-theraphotoxin-Hhn1j (87 aa).

The signal sequence occupies residues 1-24 (MVNMKASMFLTFAGLVLLFVVCYA). Residues 25–52 (SESEEKEFPKEMLSSIFAVDNDFKQEER) constitute a propeptide that is removed on maturation. Cystine bridges form between Cys-54–Cys-67, Cys-61–Cys-72, and Cys-66–Cys-79.

It belongs to the neurotoxin 10 (Hwtx-1) family. 51 (Hntx-8) subfamily. Hntx-8 sub-subfamily. As to expression, expressed by the venom gland.

It is found in the secreted. In terms of biological role, ion channel inhibitor. The protein is U3-theraphotoxin-Hhn1j of Cyriopagopus hainanus (Chinese bird spider).